The following is a 306-amino-acid chain: tRNA dimethylallyltransferase (306 aa).

Residue glycine 11–serine 18 coordinates ATP. Threonine 13–serine 18 is a substrate binding site. The segment at aspartate 35–glutamine 38 is interaction with substrate tRNA.

It belongs to the IPP transferase family. In terms of assembly, monomer. Requires Mg(2+) as cofactor.

It catalyses the reaction adenosine(37) in tRNA + dimethylallyl diphosphate = N(6)-dimethylallyladenosine(37) in tRNA + diphosphate. Functionally, catalyzes the transfer of a dimethylallyl group onto the adenine at position 37 in tRNAs that read codons beginning with uridine, leading to the formation of N6-(dimethylallyl)adenosine (i(6)A). This Borreliella burgdorferi (strain ATCC 35210 / DSM 4680 / CIP 102532 / B31) (Borrelia burgdorferi) protein is tRNA dimethylallyltransferase.